Consider the following 84-residue polypeptide: Large ribosomal subunit protein bL27 (84 aa).

The disordered stretch occupies residues 1–21 (MAHKKGGGSTKNGRDSNPKYL).

It belongs to the bacterial ribosomal protein bL27 family.

The protein is Large ribosomal subunit protein bL27 of Pelodictyon phaeoclathratiforme (strain DSM 5477 / BU-1).